Here is a 905-residue protein sequence, read N- to C-terminus: Core protein VP3 (905 aa).

The protein belongs to the orbivirus VP3 family.

The protein localises to the virion. Its function is as follows. The VP3 protein is one of the five proteins (with VP1, VP4, VP6 and VP7) which form the inner capsid of the virus. In African horse sickness virus 6 (AHSV-6), this protein is Core protein VP3 (Segment-3).